Here is a 220-residue protein sequence, read N- to C-terminus: Deoxyribose-phosphate aldolase (220 aa).

Aspartate 89 acts as the Proton donor/acceptor in catalysis. Catalysis depends on lysine 151, which acts as the Schiff-base intermediate with acetaldehyde. The active-site Proton donor/acceptor is the lysine 180.

It belongs to the DeoC/FbaB aldolase family. DeoC type 1 subfamily.

It is found in the cytoplasm. It catalyses the reaction 2-deoxy-D-ribose 5-phosphate = D-glyceraldehyde 3-phosphate + acetaldehyde. It functions in the pathway carbohydrate degradation; 2-deoxy-D-ribose 1-phosphate degradation; D-glyceraldehyde 3-phosphate and acetaldehyde from 2-deoxy-alpha-D-ribose 1-phosphate: step 2/2. In terms of biological role, catalyzes a reversible aldol reaction between acetaldehyde and D-glyceraldehyde 3-phosphate to generate 2-deoxy-D-ribose 5-phosphate. The protein is Deoxyribose-phosphate aldolase of Streptococcus equi subsp. equi (strain 4047).